Consider the following 96-residue polypeptide: Nucleoid-associated protein TC_0612 (96 aa).

The protein belongs to the YbaB/EbfC family. In terms of assembly, homodimer.

The protein localises to the cytoplasm. It localises to the nucleoid. Functionally, binds to DNA and alters its conformation. May be involved in regulation of gene expression, nucleoid organization and DNA protection. This is Nucleoid-associated protein TC_0612 from Chlamydia muridarum (strain MoPn / Nigg).